Here is a 364-residue protein sequence, read N- to C-terminus: uncharacterized protein (364 aa).

This is an uncharacterized protein from Saccharum officinarum (Sugarcane).